The chain runs to 342 residues: Cellular tumor antigen p53 (342 aa).

The segment at 1–35 (MEEADLTLPLSQDTFHDLWNNVFLSTENESLAPPE) is transcription activation (acidic). The DNA-binding element occupies 68-255 (NYAGEHGFNL…KTEEGNLEKS (188 aa)). The Zn(2+) site is built by Cys-142, His-145, Cys-201, and Cys-205. The segment at 236-243 (RVCACPGR) is interaction with DNA. A compositionally biased stretch (basic and acidic residues) spans 244–256 (DRKTEEGNLEKSG). The tract at residues 244–287 (DRKTEEGNLEKSGTKQTKKRKSAPAPDTSTAKKSKSASSGEDED) is disordered. Residues 261 to 278 (KKRKSAPAPDTSTAKKSK) carry the Bipartite nuclear localization signal motif. Residues 271 to 282 (TSTAKKSKSASS) show a composition bias toward low complexity. Positions 288–317 (KEIYTLSIRGRNRYLWFKSLNDGLELMDKT) are oligomerization. Positions 302-313 (LWFKSLNDGLEL) match the Nuclear export signal motif. Residues 318–342 (GPKIKQEIPAPSSGKRLLKGGSDSD) are disordered. Residues 319-336 (PKIKQEIPAPSSGKRLLK) are basic (repression of DNA-binding).

This sequence belongs to the p53 family. Binds DNA as a homotetramer. The cofactor is Zn(2+).

The protein localises to the cytoplasm. It is found in the nucleus. Multifunctional transcription factor that induces cell cycle arrest, DNA repair or apoptosis upon binding to its target DNA sequence. Acts as a tumor suppressor in many tumor types; induces growth arrest or apoptosis depending on the physiological circumstances and cell type. Negatively regulates cell division by controlling expression of a set of genes required for this process. One of the activated genes is an inhibitor of cyclin-dependent kinases. Apoptosis induction seems to be mediated either by stimulation of BAX and FAS antigen expression, or by repression of Bcl-2 expression. This Xiphophorus hellerii (Green swordtail) protein is Cellular tumor antigen p53 (tp53).